A 442-amino-acid polypeptide reads, in one-letter code: Putative zinc metalloprotease PM1991 (442 aa).

His21 is a binding site for Zn(2+). Residue Glu22 is part of the active site. Residue His25 participates in Zn(2+) binding. The helical transmembrane segment at 97 to 119 (AFVIAAGPIANFLFAILAYFTIY) threads the bilayer. One can recognise a PDZ domain in the interval 198 to 286 (DWRFDPEKES…FSFVVLTPEL (89 aa)). 2 helical membrane passes run 366–388 (IGLI…MNLF) and 418–440 (LSYR…NDFL).

The protein belongs to the peptidase M50B family. Zn(2+) is required as a cofactor.

It is found in the cell inner membrane. In Pasteurella multocida (strain Pm70), this protein is Putative zinc metalloprotease PM1991.